Consider the following 564-residue polypeptide: 4-hydroxy-7-methoxy-3-oxo-3,4-dihydro-2H-1,4-benzoxazin-2-yl glucoside beta-D-glucosidase 1d, chloroplastic (564 aa).

Residues 1 to 50 (MALLAAATLNPTTHLSLRSRAGRNSENLWLRSAASSQKSKGRFCNLTVRA) constitute a chloroplast transit peptide. Residues glutamine 92, histidine 194, and 239–240 (NE) contribute to the a beta-D-glucoside site. Residue glutamate 240 is the Proton donor of the active site. A disulfide bridge links cysteine 259 with cysteine 265. A beta-D-glucoside is bound by residues tyrosine 383, glutamate 456, tryptophan 504, 511–512 (EW), and phenylalanine 520. Catalysis depends on glutamate 456, which acts as the Nucleophile.

It belongs to the glycosyl hydrolase 1 family. In terms of assembly, homo- and heterohexamers. Expressed in young seedlings early after germination.

The protein resides in the plastid. It is found in the chloroplast. The enzyme catalyses Hydrolysis of terminal, non-reducing beta-D-glucosyl residues with release of beta-D-glucose.. It catalyses the reaction DIMBOA beta-D-glucoside + H2O = DIMBOA + D-glucose. It carries out the reaction DIBOA beta-D-glucoside + H2O = DIBOA + D-glucose. In terms of biological role, acts in defense of young plant parts against pests via the production of hydroxamic acids from hydroxamic acid glucosides. Enzymatic activity is highly correlated with plant growth. The preferred substrate is DIMBOA-beta-D-glucoside. In Triticum aestivum (Wheat), this protein is 4-hydroxy-7-methoxy-3-oxo-3,4-dihydro-2H-1,4-benzoxazin-2-yl glucoside beta-D-glucosidase 1d, chloroplastic (GLU1D).